Reading from the N-terminus, the 328-residue chain is Zinc finger Ran-binding domain-containing protein 2 (328 aa).

Serine 9 is modified (phosphoserine). A RanBP2-type 1 zinc finger spans residues 9–40 (SDGDWICPDKKCGNVNFARRTSCNRCGREKTT). Residues lysine 18, lysine 54, and lysine 92 each carry the N6-acetyllysine modification. The RanBP2-type 2 zinc finger occupies 65–94 (SANDWQCKTCSNVNWARRSECNMCNTPKYA). The tract at residues 117–328 (REESDGEYDE…SGSRSSSKKK (212 aa)) is disordered. Serine 120, serine 153, serine 181, serine 188, and serine 193 each carry phosphoserine. Over residues 150 to 163 (DKESEGEEEDEDED) the composition is skewed to acidic residues. Residues 151–328 (KESEGEEEDE…SGSRSSSKKK (178 aa)) form a required for nuclear targeting region. A compositionally biased stretch (basic residues) spans 196–210 (KKSNRRSRSKSRSSH). Composition is skewed to low complexity over residues 211–224 (SRSSSRSSSPSSSR) and 232–242 (RSSSSSQSRSR). Composition is skewed to basic residues over residues 251 to 271 (SRGSKSSSRSHRGSSSPRKRS) and 297 to 312 (KKRRTRSRSPERHHRS). Low complexity predominate over residues 313-328 (SSGSSHSGSRSSSKKK).

This sequence belongs to the ZRANB2 family. In terms of assembly, interacts with the C-terminal half of SNRNP70, the Arg/Ser-rich domain of AKAP17A as well as with U2AF1 and CLK1.

The protein resides in the nucleus. Functionally, splice factor required for alternative splicing of TRA2B/SFRS10 transcripts. Binds to ssRNA containing the consensus sequence 5'-AGGUAA-3'. May interfere with constitutive 5'-splice site selection. This Sus scrofa (Pig) protein is Zinc finger Ran-binding domain-containing protein 2 (ZRANB2).